Here is a 277-residue protein sequence, read N- to C-terminus: Glycerol-3-phosphate acyltransferase (277 aa).

The next 5 membrane-spanning stretches (helical) occupy residues 3–23 (LFIFLILVGYLMGSINSAIIV), 55–75 (IMVMVFDALKGILPVILAKLL), 79–99 (PVTVAFTALAAVVGHMYPVFF), 111–131 (IGALLAFHFVIGVMVAATWLL), and 155–175 (LILVGNLNIFPPLFMITILVL). The tract at residues 207-277 (SPATSAEQEF…PKTKTVKEKE (71 aa)) is disordered. A compositionally biased stretch (basic and acidic residues) spans 216–239 (FPGKEVIDTNIDETEKTEQAEAVK). Composition is skewed to basic residues over residues 240-253 (KPKAKKATTKAKKT) and 262-271 (KPRSTKPKTK).

It belongs to the PlsY family. In terms of assembly, probably interacts with PlsX.

The protein resides in the cell inner membrane. It catalyses the reaction an acyl phosphate + sn-glycerol 3-phosphate = a 1-acyl-sn-glycero-3-phosphate + phosphate. It functions in the pathway lipid metabolism; phospholipid metabolism. Functionally, catalyzes the transfer of an acyl group from acyl-phosphate (acyl-PO(4)) to glycerol-3-phosphate (G3P) to form lysophosphatidic acid (LPA). This enzyme utilizes acyl-phosphate as fatty acyl donor, but not acyl-CoA or acyl-ACP. The sequence is that of Glycerol-3-phosphate acyltransferase from Legionella pneumophila (strain Paris).